Reading from the N-terminus, the 646-residue chain is Cell surface glycoprotein MUC18 (646 aa).

Positions 1–23 are cleaved as a signal peptide; it reads MGLPRLVCAFLLAACCCCPRVAG. 2 consecutive Ig-like V-type domains span residues 24 to 129 and 139 to 242; these read VPGE…YRIQ and PNIQ…REVT. Over 24 to 559 the chain is Extracellular; the sequence is VPGEAEQPAP…RKLPEPESRG (536 aa). Disulfide bonds link Cys48/Cys116, Cys161/Cys223, Cys272/Cys320, and Cys365/Cys407. N-linked (GlcNAc...) asparagine glycosylation occurs at Asn56. Ig-like C2-type domains follow at residues 244 to 330, 335 to 424, and 430 to 510; these read PVFY…TMIS, PQEL…QLVN, and PPWM…KNTS. Residues 278–299 are disordered; sequence PPPHFSISKQNPSTREAEEETT. N-linked (GlcNAc...) asparagine glycosylation is found at Asn418, Asn449, Asn467, Asn508, Asn518, Asn527, and Asn544. Cysteines 452 and 499 form a disulfide. A disordered region spans residues 525-554; that stretch reads DSNTTTGLSTSTASPHTRANSTSTERKLPE. Over residues 533 to 547 the composition is skewed to polar residues; sequence STSTASPHTRANSTS. The helical transmembrane segment at 560–583 threads the bilayer; the sequence is VVIVAVIVCILVLAVLGAVLYFLY. Residues 584–646 are Cytoplasmic-facing; that stretch reads KKGKLPCRRS…QGEKYIDLRH (63 aa). Phosphoserine occurs at positions 606, 614, and 628. Residues 620–646 are disordered; that stretch reads EMGLLQGSSGDKRAPGDQGEKYIDLRH. Positions 629 to 646 are enriched in basic and acidic residues; sequence GDKRAPGDQGEKYIDLRH.

Detected in endothelial cells in vascular tissue throughout the body. May appear at the surface of neural crest cells during their embryonic migration. Appears to be limited to vascular smooth muscle in normal adult tissues. Associated with tumor progression and the development of metastasis in human malignant melanoma. Expressed most strongly on metastatic lesions and advanced primary tumors and is only rarely detected in benign melanocytic nevi and thin primary melanomas with a low probability of metastasis.

The protein localises to the membrane. Its function is as follows. Plays a role in cell adhesion, and in cohesion of the endothelial monolayer at intercellular junctions in vascular tissue. Its expression may allow melanoma cells to interact with cellular elements of the vascular system, thereby enhancing hematogeneous tumor spread. Could be an adhesion molecule active in neural crest cells during embryonic development. Acts as a surface receptor that triggers tyrosine phosphorylation of FYN and PTK2/FAK1, and a transient increase in the intracellular calcium concentration. This is Cell surface glycoprotein MUC18 (MCAM) from Homo sapiens (Human).